A 265-amino-acid chain; its full sequence is TATA-box-binding protein (265 aa).

The tract at residues 1-40 (MYNPSQAVPVSLHKNQDNQDGGQQRSHYPQISSQQSQSYL) is disordered. Positions 18 to 29 (NQDGGQQRSHYP) are enriched in polar residues. 2 consecutive repeat copies span residues 91–167 (LQNI…ARVV) and 181–258 (IQNM…YPIL).

The protein belongs to the TBP family. Belongs to the TFIID complex together with the TBP-associated factors (TAFs). Binds DNA as monomer.

The protein localises to the nucleus. In terms of biological role, general transcription factor that functions at the core of the DNA-binding multiprotein factor TFIID. Binding of TFIID to the TATA box is the initial transcriptional step of the pre-initiation complex (PIC), playing a role in the activation of eukaryotic genes transcribed by RNA polymerase II. This chain is TATA-box-binding protein, found in Strongylocentrotus purpuratus (Purple sea urchin).